We begin with the raw amino-acid sequence, 136 residues long: Small ribosomal subunit protein uS19 (136 aa).

Belongs to the universal ribosomal protein uS19 family.

In terms of biological role, protein S19 forms a complex with S13 that binds strongly to the 16S ribosomal RNA. This chain is Small ribosomal subunit protein uS19, found in Methanothrix thermoacetophila (strain DSM 6194 / JCM 14653 / NBRC 101360 / PT) (Methanosaeta thermophila).